Reading from the N-terminus, the 371-residue chain is Protease PrtS (371 aa).

Position 169 (histidine 169) interacts with Zn(2+). The active site involves glutamate 170. Residues histidine 173 and glutamate 193 each coordinate Zn(2+). Residue histidine 273 is the Proton donor of the active site. Residues 352–371 (KEEDKDKGKDEGKDKAETKV) form a disordered region.

The protein belongs to the peptidase M4 family. Requires Zn(2+) as cofactor.

It localises to the secreted. Inhibited by 8 mM 1,10-phenanthroline, but not by EDTA or PMSF. In terms of biological role, metalloprotease involved in the inhibition of insect antibacterial peptides. Reduces the antibacterial activity of G.mellonella hemolymph by 50%. Reduces the antibacterial activity of cecropin A by 80% and completely inhibits cecropin B. The polypeptide is Protease PrtS (Photorhabdus sp. (strain Az29)).